The sequence spans 331 residues: Tryptophan--tRNA ligase 1 (331 aa).

Residues 9 to 11 (KPT) and 17 to 18 (GN) each bind ATP. Positions 10–18 (PTGHLTLGN) match the 'HIGH' region motif. Aspartate 137 lines the L-tryptophan pocket. Residues 149-151 (GDD), valine 188, and 197-201 (KMGKS) each bind ATP. Residues 197–201 (KMGKS) carry the 'KMSKS' region motif.

The protein belongs to the class-I aminoacyl-tRNA synthetase family. In terms of assembly, homodimer.

It is found in the cytoplasm. It catalyses the reaction tRNA(Trp) + L-tryptophan + ATP = L-tryptophyl-tRNA(Trp) + AMP + diphosphate + H(+). Catalyzes the attachment of tryptophan to tRNA(Trp). This chain is Tryptophan--tRNA ligase 1, found in Streptomyces avermitilis (strain ATCC 31267 / DSM 46492 / JCM 5070 / NBRC 14893 / NCIMB 12804 / NRRL 8165 / MA-4680).